The sequence spans 160 residues: Cytochrome b6-f complex subunit 4 (160 aa).

Transmembrane regions (helical) follow at residues 36–56, 95–115, and 131–151; these read LLYVFPVVILGTIGLVTALAV, LLGIACQAAIPLGLMLVPFIE, and AVFLFGTVVTLWLGAGATFPI.

Belongs to the cytochrome b family. PetD subfamily. In terms of assembly, the 4 large subunits of the cytochrome b6-f complex are cytochrome b6, subunit IV (17 kDa polypeptide, PetD), cytochrome f and the Rieske protein, while the 4 small subunits are PetG, PetL, PetM and PetN. The complex functions as a dimer.

Its subcellular location is the cellular thylakoid membrane. Functionally, component of the cytochrome b6-f complex, which mediates electron transfer between photosystem II (PSII) and photosystem I (PSI), cyclic electron flow around PSI, and state transitions. The polypeptide is Cytochrome b6-f complex subunit 4 (Rippkaea orientalis (strain PCC 8801 / RF-1) (Cyanothece sp. (strain PCC 8801))).